The sequence spans 118 residues: Non-specific lipid-transfer protein-like 1 (118 aa).

Positions 5–113 (SDVIFEEIKE…KLRTILDPKM (109 aa)) constitute an SCP2 domain.

This Caenorhabditis elegans protein is Non-specific lipid-transfer protein-like 1 (nlt-1).